The sequence spans 474 residues: MMQHASPAPALTMMATQNVPPPPYQDSPQMTATAQPPSKAQAVHISAPSATASTPVPSAPIDPQAQLEADKRAVYRHPLFPLLTLLFEKCEQATQGSECITSASFDVDIENFVHQQEQEHKPFFSDDPELDNLMVKAIQVLRIHLLELEKVNELCKDFCNRYITCLKTKMHSDNLLRNDLGGPYSPNQPSINLHSQDLLQNSPNSMSGVSNNPQGIVVPASALQQGNIAMTTVNSQVVSGGALYQPVTMVTSQGQVVTQAIPQGAIQIQNTQVNLDLTSLLDNEDKKSKNKRGVLPKHATNIMRSWLFQHLMHPYPTEDEKRQIAAQTNLTLLQVNNWFINARRRILQPMLDASNPDPAPKAKKIKSQHRPTQRFWPNSIAAGVLQQQGGTPGTNPDGSINLDNLQSLSSDNATMAMQQAMMAAHDDSLDGTEEEDEDDMEEEEEEEEELEEEADELQTTNVSDLGLEHSDSLE.

Residues Met1–Ala42 form a disordered region. Positions Asp26–Ser38 are enriched in polar residues. The MEIS N-terminal domain occupies Gly96–Asp179. The segment at residues Lys291–Met350 is a DNA-binding region (homeobox). Disordered stretches follow at residues Leu351–Pro371, Leu385–Leu405, and Ala423–Glu474. Residues Lys361–Pro371 show a composition bias toward basic residues. Positions Leu429 to Glu456 are enriched in acidic residues.

Belongs to the TALE/MEIS homeobox family.

The protein localises to the nucleus. In Mus musculus (Mouse), this protein is Homeobox protein PKNOX2 (Pknox2).